The primary structure comprises 462 residues: uncharacterized protein (462 aa).

The TRAM domain occupies 12-70 (MLKKNDIIQVAISDLSHEGAGVAKHDGFVFFVDNALPEEVIDMRVLKVNKNSGFGKVEA). S-adenosyl-L-methionine is bound by residues Gln-294, Tyr-323, Glu-344, and Asp-392. The active-site Nucleophile is the Cys-419.

The protein belongs to the class I-like SAM-binding methyltransferase superfamily. RNA M5U methyltransferase family.

This is an uncharacterized protein from Streptococcus pyogenes serotype M1.